The sequence spans 411 residues: Lissencephaly-1 homolog (411 aa).

The LisH domain occupies 9 to 41 (QREELNQAIADYLGSNGYSSALEAFRKEADISG). Positions 56 to 83 (TSVIRLQKKVMELEAKLSEAEKEVIEGA) form a coiled coil. WD repeat units follow at residues 106–147 (GHRA…RSLK), 149–187 (HTSS…DCVK), 191–230 (GHDH…CVKT), 233–272 (GHRE…CKAE), 275–334 (AHDH…CLFV), 337–376 (GHDN…FMKT), and 379–411 (AHQH…WECR).

This sequence belongs to the WD repeat LIS1/nudF family.

It localises to the cytoplasm. It is found in the cytoskeleton. Its subcellular location is the microtubule organizing center. The protein resides in the centrosome. Positively regulates the activity of the minus-end directed microtubule motor protein dynein. May enhance dynein-mediated microtubule sliding by targeting dynein to the microtubule plus end. Required for several dynein- and microtubule-dependent processes. The chain is Lissencephaly-1 homolog from Glossina morsitans morsitans (Savannah tsetse fly).